A 201-amino-acid polypeptide reads, in one-letter code: Ribonuclease HII (201 aa).

The region spanning 15 to 201 is the RNase H type-2 domain; the sequence is AIIAGVDEAG…FAPIKAYGAP (187 aa). Positions 21, 22, and 113 each coordinate a divalent metal cation.

It belongs to the RNase HII family. Mn(2+) serves as cofactor. The cofactor is Mg(2+).

It localises to the cytoplasm. The enzyme catalyses Endonucleolytic cleavage to 5'-phosphomonoester.. Its function is as follows. Endonuclease that specifically degrades the RNA of RNA-DNA hybrids. The protein is Ribonuclease HII of Bordetella pertussis (strain Tohama I / ATCC BAA-589 / NCTC 13251).